The sequence spans 157 residues: Small ribosomal subunit protein uS7 (157 aa).

The protein belongs to the universal ribosomal protein uS7 family. Part of the 30S ribosomal subunit. Contacts proteins S9 and S11.

Functionally, one of the primary rRNA binding proteins, it binds directly to 16S rRNA where it nucleates assembly of the head domain of the 30S subunit. Is located at the subunit interface close to the decoding center, probably blocks exit of the E-site tRNA. This chain is Small ribosomal subunit protein uS7, found in Albidiferax ferrireducens (strain ATCC BAA-621 / DSM 15236 / T118) (Rhodoferax ferrireducens).